Consider the following 248-residue polypeptide: tRNA pseudouridine synthase A 2 (248 aa).

Asp55 (nucleophile) is an active-site residue. Tyr113 is a binding site for substrate.

Belongs to the tRNA pseudouridine synthase TruA family. As to quaternary structure, homodimer.

The enzyme catalyses uridine(38/39/40) in tRNA = pseudouridine(38/39/40) in tRNA. Its function is as follows. Formation of pseudouridine at positions 38, 39 and 40 in the anticodon stem and loop of transfer RNAs. The polypeptide is tRNA pseudouridine synthase A 2 (Clostridium tetani (strain Massachusetts / E88)).